The sequence spans 177 residues: FCS-Like Zinc finger 1 (177 aa).

Low complexity predominate over residues S22–G46. Disordered stretches follow at residues S22–S49 and E134–A177. The segment at H96–E140 adopts an FLZ-type zinc-finger fold. 2 stretches are compositionally biased toward basic and acidic residues: residues E134–Q143 and R154–A168.

It belongs to the FLZ family. As to quaternary structure, interacts with KIN10 and KIN11 via its FLZ-type zinc finger domain. Interacts with KINB1, KINB2 and KINB3 via its N-terminal part. Interacts with DSP3 and BBX21 via its FLZ-type zinc finger domain. Forms heterodimer with FLZ7 and FLZ15 in vitro.

Its subcellular location is the nucleus. The protein localises to the cytoplasm. Functionally, may act as an adapter to facilitate the interaction of SnRK1 complex with effector proteins, conferring tissue- and stimulus-type specific differences in the SnRK1 regulation pathway. This chain is FCS-Like Zinc finger 1, found in Arabidopsis thaliana (Mouse-ear cress).